The primary structure comprises 444 residues: Ribulose bisphosphate carboxylase (444 aa).

Catalysis depends on K163, which acts as the Proton acceptor. A substrate-binding site is contributed by K165. Mg(2+)-binding residues include K189, D191, and E192. Residue K189 is modified to N6-carboxylysine. The active-site Proton acceptor is H281. Substrate-binding positions include R282, H314, 367 to 369 (SGG), and 389 to 392 (QLGG).

Belongs to the RuBisCO large chain family. Type III subfamily. Homodimer or homodecamer. In contrast to form I RuBisCO, the form III RuBisCO is composed solely of large subunits. The cofactor is Mg(2+).

It carries out the reaction 2 (2R)-3-phosphoglycerate + 2 H(+) = D-ribulose 1,5-bisphosphate + CO2 + H2O. It catalyses the reaction D-ribulose 1,5-bisphosphate + O2 = 2-phosphoglycolate + (2R)-3-phosphoglycerate + 2 H(+). Catalyzes the addition of molecular CO(2) and H(2)O to ribulose 1,5-bisphosphate (RuBP), generating two molecules of 3-phosphoglycerate (3-PGA). Functions in an archaeal AMP degradation pathway, together with AMP phosphorylase and R15P isomerase. This chain is Ribulose bisphosphate carboxylase, found in Thermococcus onnurineus (strain NA1).